A 140-amino-acid chain; its full sequence is Putative pre-16S rRNA nuclease (140 aa).

The protein belongs to the YqgF nuclease family.

It is found in the cytoplasm. Its function is as follows. Could be a nuclease involved in processing of the 5'-end of pre-16S rRNA. The sequence is that of Putative pre-16S rRNA nuclease from Actinobacillus succinogenes (strain ATCC 55618 / DSM 22257 / CCUG 43843 / 130Z).